The sequence spans 450 residues: Deoxyguanosinetriphosphate triphosphohydrolase-like protein (450 aa).

An HD domain is found at 61-201 (RLTHSLEVAQ…AKLAPELNAD (141 aa)).

It belongs to the dGTPase family. Type 2 subfamily.

In Pasteurella multocida (strain Pm70), this protein is Deoxyguanosinetriphosphate triphosphohydrolase-like protein.